The sequence spans 157 residues: ATP synthase subunit b (157 aa).

Residues 1 to 21 (MHFLDESFWLAISFIIFVYLI) traverse the membrane as a helical segment.

Belongs to the ATPase B chain family. F-type ATPases have 2 components, F(1) - the catalytic core - and F(0) - the membrane proton channel. F(1) has five subunits: alpha(3), beta(3), gamma(1), delta(1), epsilon(1). F(0) has three main subunits: a(1), b(2) and c(10-14). The alpha and beta chains form an alternating ring which encloses part of the gamma chain. F(1) is attached to F(0) by a central stalk formed by the gamma and epsilon chains, while a peripheral stalk is formed by the delta and b chains.

It localises to the cell inner membrane. In terms of biological role, f(1)F(0) ATP synthase produces ATP from ADP in the presence of a proton or sodium gradient. F-type ATPases consist of two structural domains, F(1) containing the extramembraneous catalytic core and F(0) containing the membrane proton channel, linked together by a central stalk and a peripheral stalk. During catalysis, ATP synthesis in the catalytic domain of F(1) is coupled via a rotary mechanism of the central stalk subunits to proton translocation. Functionally, component of the F(0) channel, it forms part of the peripheral stalk, linking F(1) to F(0). In Rickettsia bellii (strain RML369-C), this protein is ATP synthase subunit b.